We begin with the raw amino-acid sequence, 940 residues long: Beta-mannosidase A (940 aa).

A signal peptide spans 1 to 21 (MHFHGIATQAVLASNITTGSG). N-linked (GlcNAc...) asparagine glycosylation is found at Asn15, Asn39, Asn79, Asn245, Asn314, Asn321, and Asn344. Catalysis depends on Glu476, which acts as the Proton donor. 7 N-linked (GlcNAc...) asparagine glycosylation sites follow: Asn534, Asn605, Asn626, Asn653, Asn733, Asn761, and Asn785.

The protein belongs to the glycosyl hydrolase 2 family. Beta-mannosidase A subfamily. Homodimer.

The protein resides in the secreted. It catalyses the reaction Hydrolysis of terminal, non-reducing beta-D-mannose residues in beta-D-mannosides.. It participates in glycan metabolism; N-glycan degradation. Functionally, exoglycosidase that cleaves the single beta-linked mannose residue from the non-reducing end of beta-mannosidic oligosaccharides of various complexity and length. Involved in the degradation of polymeric mannan and galactomannan. The sequence is that of Beta-mannosidase A (mndA) from Emericella nidulans (strain FGSC A4 / ATCC 38163 / CBS 112.46 / NRRL 194 / M139) (Aspergillus nidulans).